The chain runs to 306 residues: Pyridoxal 5'-phosphate synthase subunit SNZERR (306 aa).

A D-ribose 5-phosphate-binding site is contributed by Asp-34. Residue Lys-91 is the Schiff-base intermediate with D-ribose 5-phosphate of the active site. Gly-163 contributes to the D-ribose 5-phosphate binding site. Position 175 (Arg-175) interacts with D-glyceraldehyde 3-phosphate. D-ribose 5-phosphate contacts are provided by residues Gly-224 and 245 to 246 (GS).

It belongs to the PdxS/SNZ family.

It catalyses the reaction aldehydo-D-ribose 5-phosphate + D-glyceraldehyde 3-phosphate + L-glutamine = pyridoxal 5'-phosphate + L-glutamate + phosphate + 3 H2O + H(+). Its pathway is cofactor biosynthesis; pyridoxal 5'-phosphate biosynthesis. Its function is as follows. Catalyzes the formation of pyridoxal 5'-phosphate from ribose 5-phosphate (RBP), glyceraldehyde 3-phosphate (G3P) and ammonia. The ammonia is provided by PDX2. Can also use ribulose 5-phosphate and dihydroxyacetone phosphate as substrates, resulting from enzyme-catalyzed isomerization of RBP and G3P, respectively. Also plays an indirect role in resistance to singlet oxygen-generating photosensitizers. The sequence is that of Pyridoxal 5'-phosphate synthase subunit SNZERR (SNZERR) from Suberites domuncula (Sponge).